We begin with the raw amino-acid sequence, 368 residues long: tRNA-specific 2-thiouridylase MnmA (368 aa).

Residues 11 to 18 and Met37 contribute to the ATP site; that span reads GMSGGVDS. An interaction with target base in tRNA region spans residues 97 to 99; that stretch reads NPD. Cys102 serves as the catalytic Nucleophile. A disulfide bond links Cys102 and Cys199. Gly127 lines the ATP pocket. Residues 149–151 are interaction with tRNA; the sequence is KDQ. Cys199 functions as the Cysteine persulfide intermediate in the catalytic mechanism. The tract at residues 311-312 is interaction with tRNA; it reads RY.

Belongs to the MnmA/TRMU family. As to quaternary structure, interacts with TusE.

Its subcellular location is the cytoplasm. It carries out the reaction S-sulfanyl-L-cysteinyl-[protein] + uridine(34) in tRNA + AH2 + ATP = 2-thiouridine(34) in tRNA + L-cysteinyl-[protein] + A + AMP + diphosphate + H(+). Its function is as follows. Catalyzes the 2-thiolation of uridine at the wobble position (U34) of tRNA(Lys), tRNA(Glu) and tRNA(Gln), leading to the formation of s(2)U34, the first step of tRNA-mnm(5)s(2)U34 synthesis. Sulfur is provided by IscS, via a sulfur-relay system. Binds ATP and its substrate tRNAs. The polypeptide is tRNA-specific 2-thiouridylase MnmA (Salmonella paratyphi B (strain ATCC BAA-1250 / SPB7)).